Reading from the N-terminus, the 588-residue chain is Polyphenol oxidase II, chloroplastic (588 aa).

Over residues 1 to 10 the composition is skewed to polar residues; sequence MASFTTSPCT. Residues 1–32 form a disordered region; that stretch reads MASFTTSPCTSAAPKTPKSLSSSATISSPLPK. The N-terminal 50 residues, 1–50, are a transit peptide targeting the chloroplast; the sequence is MASFTTSPCTSAAPKTPKSLSSSATISSPLPKPSQIHIATAKRTHHFKVS. The segment covering 16–29 has biased composition (low complexity); that stretch reads TPKSLSSSATISSP. A thylakoid-targeting transit peptide spans 51-88; it reads CNAPNGDSQPKLDRRDVLLGLGGLAGAASLINNPLAFA. Intrachain disulfides connect Cys99–Cys116 and Cys115–Cys179. Cu cation is bound by residues His178, His199, His208, His330, His334, and His366. Residues 182 to 199 constitute a cross-link (2'-(S-cysteinyl)-histidine (Cys-His)); it reads CNGGYVQTDYPDKEIQVH.

Belongs to the tyrosinase family. In terms of assembly, monomer. Requires Cu(2+) as cofactor.

The protein resides in the plastid. Its subcellular location is the chloroplast thylakoid lumen. It carries out the reaction 2 catechol + O2 = 2 1,2-benzoquinone + 2 H2O. Catalyzes the oxidation of mono- and o-diphenols to o-diquinones. In Ipomoea batatas (Sweet potato), this protein is Polyphenol oxidase II, chloroplastic (co-2).